We begin with the raw amino-acid sequence, 701 residues long: Coiled-coil domain-containing protein 62 (701 aa).

Coiled coils occupy residues 61–197 and 241–342; these read ETST…LQAR and TCVV…QFLN. Residues 624–652 are disordered; that stretch reads KSAEREEESAALPDRRTSANEKDDFSPTS. A compositionally biased stretch (basic and acidic residues) spans 636-648; sequence PDRRTSANEKDDF. 2 consecutive short sequence motifs (LXXLL motif) follow at residues 654–658 and 670–674; these read LQRLL and LSTLL.

Interacts with ESR1 and ESR2 in the presence of estradiol/E2. The interaction with ESR2 recruits CCDC62 to ER target genes, including cyclin-D1/CCND1 AP-1 promoter. Interacts with GOPC. In terms of tissue distribution, highly expressed in testis, not detected in other tissues (at protein level). Expressed at low levels in the epididymis, lung, spleen, bladder, kidney, liver, muscle.

The protein localises to the cytoplasm. Its subcellular location is the nucleus. The protein resides in the cytoplasmic vesicle. It is found in the secretory vesicle. It localises to the acrosome. Nuclear receptor coactivator that can enhance preferentially estrogen receptors ESR1 and ESR2 transactivation. Also modulates progesterone/PGR, glucocorticoid/NR3C1 and androgen/AR receptors transactivation, although at lower level; little effect on vitamin D receptor/VDR. Required for normal spermiogenesis. It probably plays a role in acrosome formation. This is Coiled-coil domain-containing protein 62 (Ccdc62) from Mus musculus (Mouse).